Reading from the N-terminus, the 500-residue chain is Squalene epoxidase ERG1 (500 aa).

Residues 20-40 form a helical membrane-spanning segment; sequence EADVVVVGAGVFGCTMAFALA. Residues 30–31, 50–51, arginine 58, arginine 145, aspartate 332, and methionine 345 each bind FAD; these read VF and ER. Helical transmembrane passes span 450–470 and 474–494; these read AFLA…LGIF and LAII…IPIM.

This sequence belongs to the squalene monooxygenase family. Requires FAD as cofactor.

The protein localises to the microsome membrane. It is found in the endoplasmic reticulum membrane. Its subcellular location is the lipid droplet. The enzyme catalyses squalene + reduced [NADPH--hemoprotein reductase] + O2 = (S)-2,3-epoxysqualene + oxidized [NADPH--hemoprotein reductase] + H2O + H(+). It functions in the pathway terpene metabolism; lanosterol biosynthesis; lanosterol from farnesyl diphosphate: step 2/3. The protein operates within steroid metabolism; ergosterol biosynthesis. Its function is as follows. Squalene epoxidase; part of the third module of ergosterol biosynthesis pathway that includes the late steps of the pathway. ERG1 catalyzes the epoxidation of squalene into 2,3-epoxysqualene. The third module or late pathway involves the ergosterol synthesis itself through consecutive reactions that mainly occur in the endoplasmic reticulum (ER) membrane. Firstly, the squalene synthase ERG9 catalyzes the condensation of 2 farnesyl pyrophosphate moieties to form squalene, which is the precursor of all steroids. Squalene synthase is crucial for balancing the incorporation of farnesyl diphosphate (FPP) into sterol and nonsterol isoprene synthesis. Secondly, squalene is converted into lanosterol by the consecutive action of the squalene epoxidase ERG1 and the lanosterol synthase ERG7. Then, the delta(24)-sterol C-methyltransferase ERG6 methylates lanosterol at C-24 to produce eburicol. Eburicol is the substrate of the sterol 14-alpha demethylase encoded by CYP51A, CYP51B and CYP51C, to yield 4,4,24-trimethyl ergosta-8,14,24(28)-trienol. CYP51B encodes the enzyme primarily responsible for sterol 14-alpha-demethylation, and plays an essential role in ascospore formation. CYP51A encodes an additional sterol 14-alpha-demethylase, induced on ergosterol depletion and responsible for the intrinsic variation in azole sensitivity. The third CYP51 isoform, CYP51C, does not encode a sterol 14-alpha-demethylase, but is required for full virulence on host wheat ears. The C-14 reductase ERG24 then reduces the C14=C15 double bond which leads to 4,4-dimethylfecosterol. A sequence of further demethylations at C-4, involving the C-4 demethylation complex containing the C-4 methylsterol oxidases ERG25, the sterol-4-alpha-carboxylate 3-dehydrogenase ERG26 and the 3-keto-steroid reductase ERG27, leads to the production of fecosterol via 4-methylfecosterol. ERG28 has a role as a scaffold to help anchor ERG25, ERG26 and ERG27 to the endoplasmic reticulum. The C-8 sterol isomerase ERG2 then catalyzes the reaction which results in unsaturation at C-7 in the B ring of sterols and thus converts fecosterol to episterol. The sterol-C5-desaturases ERG3A and ERG3BB then catalyze the introduction of a C-5 double bond in the B ring to produce 5-dehydroepisterol. The C-22 sterol desaturases ERG5A and ERG5B further convert 5-dehydroepisterol into ergosta-5,7,22,24(28)-tetraen-3beta-ol by forming the C-22(23) double bond in the sterol side chain. Finally, ergosta-5,7,22,24(28)-tetraen-3beta-ol is substrate of the C-24(28) sterol reductase ERG4 to produce ergosterol. The sequence is that of Squalene epoxidase ERG1 from Gibberella zeae (strain ATCC MYA-4620 / CBS 123657 / FGSC 9075 / NRRL 31084 / PH-1) (Wheat head blight fungus).